We begin with the raw amino-acid sequence, 127 residues long: Ribosome-binding factor A (127 aa).

The protein belongs to the RbfA family. Monomer. Binds 30S ribosomal subunits, but not 50S ribosomal subunits or 70S ribosomes.

It localises to the cytoplasm. Functionally, one of several proteins that assist in the late maturation steps of the functional core of the 30S ribosomal subunit. Associates with free 30S ribosomal subunits (but not with 30S subunits that are part of 70S ribosomes or polysomes). Required for efficient processing of 16S rRNA. May interact with the 5'-terminal helix region of 16S rRNA. This Rickettsia typhi (strain ATCC VR-144 / Wilmington) protein is Ribosome-binding factor A.